The following is a 132-amino-acid chain: U-scoloptoxin(11)-Sa1a (132 aa).

The N-terminal stretch at 1–19 (MIRFFAFVLFFATQELILC) is a signal peptide.

Belongs to the scoloptoxin-11 family. Contains 5 disulfide bonds. In terms of tissue distribution, expressed by the venom gland.

It is found in the secreted. This chain is U-scoloptoxin(11)-Sa1a, found in Scolopendra alternans (Florida Keys giant centipede).